The primary structure comprises 433 residues: Legumain (433 aa).

An N-terminal signal peptide occupies residues 1–17 (MVWKVAVFLSVALGIGA). Asn-91 is a glycosylation site (N-linked (GlcNAc...) asparagine). His-148 is a catalytic residue. An N-linked (GlcNAc...) asparagine glycan is attached at Asn-167. Residue Cys-189 is the Nucleophile of the active site. 2 N-linked (GlcNAc...) asparagine glycosylation sites follow: Asn-263 and Asn-272. Residues 324-433 (DLEESRQLTE…SMDHVCLGHY (110 aa)) constitute a propeptide that is removed on maturation. 2 disulfide bridges follow: Cys-378/Cys-412 and Cys-390/Cys-429.

This sequence belongs to the peptidase C13 family. As to quaternary structure, homodimer before autocatalytic removal of the propeptide. Monomer after autocatalytic processing. May interact with integrins. In terms of processing, activated by autocatalytic processing at pH 4. In terms of tissue distribution, ubiquitous. Particularly abundant in kidney, heart and placenta.

The protein resides in the lysosome. It catalyses the reaction Hydrolysis of proteins and small molecule substrates at -Asn-|-Xaa- bonds.. Inhibited by CST6. Functionally, has a strict specificity for hydrolysis of asparaginyl bonds. Can also cleave aspartyl bonds slowly, especially under acidic conditions. Involved in the processing of proteins for MHC class II antigen presentation in the lysosomal/endosomal system. Also involved in MHC class I antigen presentation in cross-presenting dendritic cells by mediating cleavage and maturation of Perforin-2 (MPEG1), thereby promoting antigen translocation in the cytosol. Required for normal lysosomal protein degradation in renal proximal tubules. Required for normal degradation of internalized EGFR. Plays a role in the regulation of cell proliferation via its role in EGFR degradation. This Homo sapiens (Human) protein is Legumain.